The following is a 302-amino-acid chain: Acetaldehyde dehydrogenase (302 aa).

Cysteine 131 (acyl-thioester intermediate) is an active-site residue. NAD(+)-binding positions include 162 to 170 and asparagine 273; that span reads SAGPGTRKN.

This sequence belongs to the acetaldehyde dehydrogenase family.

It carries out the reaction acetaldehyde + NAD(+) + CoA = acetyl-CoA + NADH + H(+). The sequence is that of Acetaldehyde dehydrogenase from Acidovorax sp. (strain JS42).